Here is a 542-residue protein sequence, read N- to C-terminus: 1,3-beta-glucanosyltransferase gas1 (542 aa).

An N-terminal signal peptide occupies residues 1–19; it reads MKFSILSLAVAGLVGLAKA. Residue N35 is glycosylated (N-linked (GlcNAc...) asparagine). Cysteines 70 and 99 form a disulfide. Residue Y88 participates in (1,3-beta-D-glucosyl)n binding. N-linked (GlcNAc...) asparagine glycosylation is present at N91. The (1,3-beta-D-glucosyl)n site is built by N156 and E157. The Proton donor role is filled by E157. N161 carries an N-linked (GlcNAc...) asparagine glycan. (1,3-beta-D-glucosyl)n contacts are provided by D198 and R203. Cystine bridges form between C212–C345, C230–C261, C367–C419, C376–C439, and C395–C400. N249 is a glycosylation site (N-linked (GlcNAc...) asparagine). The active-site Nucleophile is E258. N279 carries an N-linked (GlcNAc...) asparagine glycan. Y290 lines the (1,3-beta-D-glucosyl)n pocket. N-linked (GlcNAc...) asparagine glycans are attached at residues N406, N484, N502, and N509. Residues 490–515 are disordered; the sequence is MSTSYTSGSGSSNSSGSSSNSSSKSS. S516 carries the GPI-anchor amidated serine lipid modification. Positions 517 to 542 are cleaved as a propeptide — removed in mature form; that stretch reads GASSYNLNMVITFLSVVIGGTAVLFI.

This sequence belongs to the glycosyl hydrolase 72 family. Post-translationally, the GPI-anchor is attached to the protein in the endoplasmic reticulum and serves to target the protein to the cell surface. There, the glucosamine-inositol phospholipid moiety is cleaved off and the GPI-modified mannoprotein is covalently attached via its lipidless GPI glycan remnant to the 1,6-beta-glucan of the outer cell wall layer.

Its subcellular location is the secreted. It localises to the cell wall. The protein resides in the membrane. Splits internally a 1,3-beta-glucan molecule and transfers the newly generated reducing end (the donor) to the non-reducing end of another 1,3-beta-glucan molecule (the acceptor) forming a 1,3-beta linkage, resulting in the elongation of 1,3-beta-glucan chains in the cell wall. The sequence is that of 1,3-beta-glucanosyltransferase gas1 (gas1) from Schizosaccharomyces pombe (strain 972 / ATCC 24843) (Fission yeast).